The chain runs to 106 residues: Small ribosomal subunit protein uS10 (106 aa).

It belongs to the universal ribosomal protein uS10 family. Part of the 30S ribosomal subunit.

Its function is as follows. Involved in the binding of tRNA to the ribosomes. The protein is Small ribosomal subunit protein uS10 of Caldicellulosiruptor bescii (strain ATCC BAA-1888 / DSM 6725 / KCTC 15123 / Z-1320) (Anaerocellum thermophilum).